Consider the following 955-residue polypeptide: Aminopeptidase A (955 aa).

Residues 1–17 are Cytoplasmic-facing; sequence MDIEDKSSKMHCMKGKH. Residues 18 to 38 form a helical; Signal-anchor for type II membrane protein membrane-spanning segment; it reads VAIICGVVIAVGLILGLGLGL. Residues 39-955 are Extracellular-facing; sequence GLKPEACNPP…LENSEQPNFV (917 aa). The disordered stretch occupies residues 49–69; it reads EDNGLLSTKPPTTSTPNVTNP. Residues 55-69 are compositionally biased toward low complexity; it reads STKPPTTSTPNVTNP. Asn-65, Asn-118, and Asn-192 each carry an N-linked (GlcNAc...) asparagine glycan. Position 218 (Glu-218) interacts with substrate. Residues Asn-312, Asn-319, and Asn-335 are each glycosylated (N-linked (GlcNAc...) asparagine). 352 to 356 is a substrate binding site; sequence GAMEN. His-388 is a binding site for Zn(2+). Glu-389 functions as the Proton acceptor in the catalytic mechanism. Zn(2+)-binding residues include His-392 and Glu-411. N-linked (GlcNAc...) asparagine glycosylation is found at Asn-458, Asn-547, Asn-584, Asn-592, Asn-647, Asn-674, Asn-681, Asn-759, Asn-766, Asn-823, and Asn-836. Residue Arg-882 coordinates substrate.

The protein belongs to the peptidase M1 family. As to quaternary structure, homodimer; disulfide-linked. Zn(2+) is required as a cofactor.

The protein localises to the cell membrane. The catalysed reaction is Release of N-terminal glutamate (and to a lesser extent aspartate) from a peptide.. The partially purified protein is inhibited by the aminopeptidase competitive inhibitors amastatin (Leu and acidic inhibitor), and bestatin (Leu inhibitor), by chelating agents EDTA, and 1,10-Phenanthroline, as well as by Zn(2+) ions. Substrate specificity is modulated by Ca(2+), Ba(2+), and Mn(2+) ions which enhances the enzymatic activity for cleavage of acidic residues. In terms of biological role, venom protein that cleaves N-terminal acidic residues from peptides with high potency in presence of calcium. It may have several roles in venom including alteration of blood pressure by cleaving circulating angiotensin-2, general degradation of host tissue, increase of permeability to other venom components, and/or processing of other toxins in the venom. The protein is Aminopeptidase A of Gloydius brevicauda (Korean slamosa snake).